The sequence spans 238 residues: Isoprene-epoxide--glutathione S-transferase (238 aa).

Residues 7–82 form the GST N-terminal domain; the sequence is YVPAWGIPDI…YLKNKFGDKL (76 aa). A GST C-terminal domain is found at 118–238; the sequence is DAGWETYIPF…LERIRKQYDI (121 aa).

This sequence belongs to the GST superfamily. As to quaternary structure, homodimer.

The catalysed reaction is 2-glutathionyl-2-methylbut-3-en-1-ol = (3R)-3,4-epoxy-3-methylbut-1-ene + glutathione. Activity is inhibited by 1,2-epoxyhexane. Functionally, involved in isoprene degradation. Catalyzes the glutathione-dependent ring opening of various epoxides. The highest conversion rate is observed with the physiological substrate, 3,4-epoxy-3-methyl-1-butene, which is the primary oxidation product of isoprene. It can also use other epoxides, including epoxyethane, epoxypropane, epithiopropane, epichlorohydrin, epifluorohydrin, epibromohydrin, 1,2-epoxybutane, 1,2-epoxyhexane, cis-2,3-epoxybutane, cis-1,2-dichloroepoxyethane and trans-1,2-dichloroepoxyethane. The chain is Isoprene-epoxide--glutathione S-transferase from Rhodococcus sp. (strain AD45).